Consider the following 205-residue polypeptide: Low-density lipoprotein receptor class A domain-containing protein 1 (205 aa).

A helical transmembrane segment spans residues 43–63; that stretch reads LLLLLATVAALIALVTILGLP. An LDL-receptor class A 1 domain is found at 71–114; sequence ACITLTNRTGFLCHDQRSCIPASGVCDGVRTCTHGEDEDESLCR. Intrachain disulfides connect Cys-72–Cys-89, Cys-83–Cys-102, Cys-96–Cys-113, Cys-141–Cys-160, Cys-163–Cys-180, and Cys-170–Cys-193. In terms of domain architecture, LDL-receptor class A 2; atypical spans 115-161; it reads DVPQSLPHFLVAHCGDPASWIYSDQKCDGTNNCGDCSDELSPVTVCP. The LDL-receptor class A 3; atypical domain occupies 162-203; it reads PCGPGWWRCPSTFFKYCDCIPRHLCRDHVQHCSDWSDEYACP.

The protein belongs to the LDLR family.

The protein localises to the membrane. This is Low-density lipoprotein receptor class A domain-containing protein 1 (LDLRAD1) from Homo sapiens (Human).